We begin with the raw amino-acid sequence, 101 residues long: uncharacterized protein (101 aa).

A helical transmembrane segment spans residues 70–90; that stretch reads VLFIPIILLLPPSCPLTGVTV.

It is found in the membrane. This is an uncharacterized protein from Saccharomyces cerevisiae (strain ATCC 204508 / S288c) (Baker's yeast).